The sequence spans 325 residues: Foldase protein PrsA (325 aa).

The signal sequence occupies residues 1-20 (MKLMNKIIVPVTASALLLGA). A lipid anchor (N-palmitoyl cysteine) is attached at cysteine 21. Cysteine 21 is lipidated: S-diacylglycerol cysteine. Residues 139-245 (ENSKKTSHIL…YGYHIIKADK (107 aa)) form the PpiC domain. Disordered stretches follow at residues 159-200 (EGLS…SAKK) and 303-325 (PDKI…NSGS).

It belongs to the PrsA family.

Its subcellular location is the cell membrane. It carries out the reaction [protein]-peptidylproline (omega=180) = [protein]-peptidylproline (omega=0). Plays a major role in protein secretion by helping the post-translocational extracellular folding of several secreted proteins. This chain is Foldase protein PrsA, found in Staphylococcus epidermidis (strain ATCC 35984 / DSM 28319 / BCRC 17069 / CCUG 31568 / BM 3577 / RP62A).